A 679-amino-acid polypeptide reads, in one-letter code: Methionine--tRNA ligase (679 aa).

The short motif at P15–H25 is the 'HIGH' region element. 4 residues coordinate Zn(2+): C147, C150, C160, and C163. A 'KMSKS' region motif is present at residues K332–S336. An ATP-binding site is contributed by T335. Residues D578–K679 form the tRNA-binding domain.

The protein belongs to the class-I aminoacyl-tRNA synthetase family. MetG type 1 subfamily. In terms of assembly, homodimer. Requires Zn(2+) as cofactor.

It localises to the cytoplasm. It carries out the reaction tRNA(Met) + L-methionine + ATP = L-methionyl-tRNA(Met) + AMP + diphosphate. In terms of biological role, is required not only for elongation of protein synthesis but also for the initiation of all mRNA translation through initiator tRNA(fMet) aminoacylation. The chain is Methionine--tRNA ligase from Bacteroides fragilis (strain ATCC 25285 / DSM 2151 / CCUG 4856 / JCM 11019 / LMG 10263 / NCTC 9343 / Onslow / VPI 2553 / EN-2).